Here is a 220-residue protein sequence, read N- to C-terminus: tRNA (guanine-N(7)-)-methyltransferase (220 aa).

S-adenosyl-L-methionine is bound by residues E46, D71, D100, and D122. D122 is a catalytic residue. Substrate contacts are provided by residues K126, D158, and 196-199 (TEYE).

The protein belongs to the class I-like SAM-binding methyltransferase superfamily. TrmB family.

The catalysed reaction is guanosine(46) in tRNA + S-adenosyl-L-methionine = N(7)-methylguanosine(46) in tRNA + S-adenosyl-L-homocysteine. It functions in the pathway tRNA modification; N(7)-methylguanine-tRNA biosynthesis. Catalyzes the formation of N(7)-methylguanine at position 46 (m7G46) in tRNA. This Malacoplasma penetrans (strain HF-2) (Mycoplasma penetrans) protein is tRNA (guanine-N(7)-)-methyltransferase.